The primary structure comprises 424 residues: Histidine--tRNA ligase (424 aa).

This sequence belongs to the class-II aminoacyl-tRNA synthetase family. As to quaternary structure, homodimer.

The protein resides in the cytoplasm. The enzyme catalyses tRNA(His) + L-histidine + ATP = L-histidyl-tRNA(His) + AMP + diphosphate + H(+). The chain is Histidine--tRNA ligase from Salmonella dublin (strain CT_02021853).